Here is a 352-residue protein sequence, read N- to C-terminus: Ferrochelatase (352 aa).

2 residues coordinate Fe cation: His-222 and Glu-303.

The protein belongs to the ferrochelatase family.

Its subcellular location is the cytoplasm. The enzyme catalyses heme b + 2 H(+) = protoporphyrin IX + Fe(2+). Its pathway is porphyrin-containing compound metabolism; protoheme biosynthesis; protoheme from protoporphyrin-IX: step 1/1. Catalyzes the ferrous insertion into protoporphyrin IX. The polypeptide is Ferrochelatase (Brucella melitensis biotype 2 (strain ATCC 23457)).